Here is a 333-residue protein sequence, read N- to C-terminus: Nuclear egress protein 1 (333 aa).

Residues 45-64 are disordered; the sequence is SRRYKSVSRSGPSMRVRSRT. The segment at 128–251 adopts a CCCH-type zinc-finger fold; it reads CLSLSGMGYH…YVIFPGKSVH (124 aa).

It belongs to the herpesviridae NEC1 protein family. In terms of assembly, forms a heterohexameric complex with NEC2. Interacts with capsid vertex specific component 2/CVC2; this interaction directs the capsid to the host inner nuclear membrane to initiate budding. In terms of processing, phosphorylated at serine residues in the N-terminus. This phosphorylation regulates the localization within the inner nuclear membrane.

It is found in the host nucleus inner membrane. In terms of biological role, plays an essential role in virion nuclear egress, the first step of virion release from infected cell. Within the host nucleus, NEC1 interacts with the newly formed capsid through the vertexes and directs it to the inner nuclear membrane by associating with NEC2. Induces the budding of the capsid at the inner nuclear membrane as well as its envelopment into the perinuclear space. There, the NEC1/NEC2 complex promotes the fusion of the enveloped capsid with the outer nuclear membrane and the subsequent release of the viral capsid into the cytoplasm where it will reach the secondary budding sites in the host Golgi or trans-Golgi network. The protein is Nuclear egress protein 1 of Varicella-zoster virus (strain Dumas) (HHV-3).